We begin with the raw amino-acid sequence, 195 residues long: Probable DNA-directed RNA polymerase subunit delta (195 aa).

The 68-residue stretch at 14–81 folds into the HTH HARE-type domain; sequence FALVEIATAI…GNNEWALRAW (68 aa). 2 stretches are compositionally biased toward acidic residues: residues 120–172 and 181–195; these read DDDV…DESI and GGDD…DQEK. Positions 120–195 are disordered; it reads DDDVIDYNDD…DDLSDGDQEK (76 aa).

Belongs to the RpoE family. RNAP is composed of a core of 2 alpha, a beta and a beta' subunits. The core is associated with a delta subunit and one of several sigma factors.

Functionally, participates in both the initiation and recycling phases of transcription. In the presence of the delta subunit, RNAP displays an increased specificity of transcription, a decreased affinity for nucleic acids, and an increased efficiency of RNA synthesis because of enhanced recycling. The protein is Probable DNA-directed RNA polymerase subunit delta of Leuconostoc mesenteroides subsp. mesenteroides (strain ATCC 8293 / DSM 20343 / BCRC 11652 / CCM 1803 / JCM 6124 / NCDO 523 / NBRC 100496 / NCIMB 8023 / NCTC 12954 / NRRL B-1118 / 37Y).